The following is a 222-amino-acid chain: 2-C-methyl-D-erythritol 4-phosphate cytidylyltransferase (222 aa).

It belongs to the IspD/TarI cytidylyltransferase family. IspD subfamily.

It carries out the reaction 2-C-methyl-D-erythritol 4-phosphate + CTP + H(+) = 4-CDP-2-C-methyl-D-erythritol + diphosphate. It functions in the pathway isoprenoid biosynthesis; isopentenyl diphosphate biosynthesis via DXP pathway; isopentenyl diphosphate from 1-deoxy-D-xylulose 5-phosphate: step 2/6. Its function is as follows. Catalyzes the formation of 4-diphosphocytidyl-2-C-methyl-D-erythritol from CTP and 2-C-methyl-D-erythritol 4-phosphate (MEP). The protein is 2-C-methyl-D-erythritol 4-phosphate cytidylyltransferase of Porphyromonas gingivalis (strain ATCC 33277 / DSM 20709 / CIP 103683 / JCM 12257 / NCTC 11834 / 2561).